A 213-amino-acid chain; its full sequence is Agglutinin isolectin 2 (213 aa).

Residues 1–27 (MRKMMSTMALTLGAAVFLAFAAATAQA) form the signal peptide. Gln28 carries the post-translational modification Pyrrolidone carboxylic acid. Chitin-binding type-1 domains lie at 28–69 (QRCG…ACWT), 70–112 (SKRC…PCRA), 113–155 (DIKC…ACST), and 156–198 (DKPC…GCDA). 16 cysteine pairs are disulfide-bonded: Cys30-Cys45, Cys39-Cys51, Cys44-Cys58, Cys62-Cys67, Cys73-Cys88, Cys82-Cys94, Cys87-Cys101, Cys105-Cys110, Cys116-Cys131, Cys125-Cys137, Cys130-Cys144, Cys148-Cys153, Cys159-Cys174, Cys168-Cys180, Cys173-Cys187, and Cys191-Cys196. 37-39 (MEC) is a binding site for substrate. Substrate is bound at residue 89–100 (SQYGHCGFGAEY). A substrate-binding site is contributed by 141 to 142 (SE). Residues 199-213 (VFAGAITANSTLLAE) constitute a propeptide that is removed on maturation.

In terms of assembly, homodimer, u-shaped.

N-acetyl-D-glucosamine / N-acetyl-D-neuraminic acid binding lectin. The polypeptide is Agglutinin isolectin 2 (Triticum aestivum (Wheat)).